We begin with the raw amino-acid sequence, 624 residues long: Translocator protein BipB (624 aa).

Residues 54-99 are disordered; sequence LASEQCDAQPVTDDARLDRLDDKPALRAPRSDAAHAADGNARGNGG. A compositionally biased stretch (basic and acidic residues) spans 66-88; the sequence is DDARLDRLDDKPALRAPRSDAAH. Positions 313 to 343 form a coiled coil; that stretch reads EMQAKREAELQKKSDEYQEQVKKAEEMQKTM. 3 helical membrane passes run 359-379, 405-425, and 434-454; these read FAAA…GLAL, AILK…LVAC, and LAGA…AAFV.

It belongs to the SctE/SipB/YopB family.

Its subcellular location is the secreted. It localises to the host membrane. Plays a role in the bacterium-induced formation of multinucleated giant cell (MNGC), which is formed after host cell fusion, as well as in the intercellular spreading of bacteria and in the induction of apoptosis in macrophages. May act in concert with other effector proteins to induce fusion of host cell membranes. The polypeptide is Translocator protein BipB (bipB) (Burkholderia thailandensis (strain ATCC 700388 / DSM 13276 / CCUG 48851 / CIP 106301 / E264)).